An 86-amino-acid chain; its full sequence is Polcalcin Che a 3 (86 aa).

EF-hand domains lie at 8 to 43 (QDIADRERIFKRFDTNGDGKISSSELGDALKTLGSV) and 43 to 78 (VTPDEVRRMMAEIDTDGDGFISFDEFTDFARANRGL). Ca(2+)-binding residues include aspartate 21, asparagine 23, aspartate 25, lysine 27, glutamate 32, aspartate 56, aspartate 58, aspartate 60, and glutamate 67.

The sequence is that of Polcalcin Che a 3 from Chenopodium album (Fat hen).